Consider the following 273-residue polypeptide: Dermonecrotic toxin LsaSicTox-alphaIB1ai (273 aa).

His-5 is a catalytic residue. Mg(2+) contacts are provided by Glu-25 and Asp-27. The Nucleophile role is filled by His-41. 2 disulfide bridges follow: Cys-45–Cys-51 and Cys-47–Cys-190. Asp-85 contacts Mg(2+).

It belongs to the arthropod phospholipase D family. Class II subfamily. Mg(2+) is required as a cofactor. Expressed by the venom gland.

The protein resides in the secreted. It carries out the reaction an N-(acyl)-sphingosylphosphocholine = an N-(acyl)-sphingosyl-1,3-cyclic phosphate + choline. The catalysed reaction is an N-(acyl)-sphingosylphosphoethanolamine = an N-(acyl)-sphingosyl-1,3-cyclic phosphate + ethanolamine. It catalyses the reaction a 1-acyl-sn-glycero-3-phosphocholine = a 1-acyl-sn-glycero-2,3-cyclic phosphate + choline. The enzyme catalyses a 1-acyl-sn-glycero-3-phosphoethanolamine = a 1-acyl-sn-glycero-2,3-cyclic phosphate + ethanolamine. Functionally, dermonecrotic toxins cleave the phosphodiester linkage between the phosphate and headgroup of certain phospholipids (sphingolipid and lysolipid substrates), forming an alcohol (often choline) and a cyclic phosphate. This toxin acts on sphingomyelin (SM). It may also act on ceramide phosphoethanolamine (CPE), lysophosphatidylcholine (LPC) and lysophosphatidylethanolamine (LPE), but not on lysophosphatidylserine (LPS), and lysophosphatidylglycerol (LPG). It acts by transphosphatidylation, releasing exclusively cyclic phosphate products as second products. Induces dermonecrosis, hemolysis, increased vascular permeability, edema, inflammatory response, and platelet aggregation. The chain is Dermonecrotic toxin LsaSicTox-alphaIB1ai from Loxosceles sabina (Tucson recluse spider).